Reading from the N-terminus, the 308-residue chain is UPF0282 protein M1425_2116 (308 aa).

It belongs to the UPF0282 family.

In Saccharolobus islandicus (strain M.14.25 / Kamchatka #1) (Sulfolobus islandicus), this protein is UPF0282 protein M1425_2116.